Here is a 193-residue protein sequence, read N- to C-terminus: Xanthine phosphoribosyltransferase (193 aa).

Residues leucine 20 and threonine 27 each coordinate xanthine. 128 to 132 (ANGQA) provides a ligand contact to 5-phospho-alpha-D-ribose 1-diphosphate. Lysine 156 serves as a coordination point for xanthine.

Belongs to the purine/pyrimidine phosphoribosyltransferase family. Xpt subfamily. In terms of assembly, homodimer.

It is found in the cytoplasm. The enzyme catalyses XMP + diphosphate = xanthine + 5-phospho-alpha-D-ribose 1-diphosphate. It participates in purine metabolism; XMP biosynthesis via salvage pathway; XMP from xanthine: step 1/1. In terms of biological role, converts the preformed base xanthine, a product of nucleic acid breakdown, to xanthosine 5'-monophosphate (XMP), so it can be reused for RNA or DNA synthesis. This Streptococcus pyogenes serotype M49 (strain NZ131) protein is Xanthine phosphoribosyltransferase.